The sequence spans 241 residues: MQDPNEDTEWNDILRDFGILPPKEESKDEIEEMVLRLQKEAMVKPFEKMTLAQLKEAEDEFDEEDMQAVETYRKKRLQEWKALKKKQKFGELREISGNQYVNEVTNAEEDVWVIIHLYRSSIPMCLLVNQHLSLLARKFPETKFVKAIVNSCIQHYHDNCLPTIFVYKNGQIEAKFIGIIECGGINLKLEELEWKLAEVGAIQTDLEENPRKDMVDMMVSSIRNTSIHDDSDSSNSDNDTK.

Residues 34–202 form the Phosducin domain; sequence VLRLQKEAMV…EWKLAEVGAI (169 aa). The thioredoxin fold stretch occupies residues 89–241; the sequence is FGELREISGN…DSSNSDNDTK (153 aa).

This sequence belongs to the phosducin family. As to quaternary structure, interacts with the CCT chaperonin complex and actin. Testis-specific.

The protein localises to the endoplasmic reticulum. Its function is as follows. Essential for male fertility, spermiogenesis and acrosome formation. The polypeptide is Phosducin-like protein 2 (PDCL2) (Homo sapiens (Human)).